Reading from the N-terminus, the 369-residue chain is C-C chemokine receptor type 9 (369 aa).

Residues 1-48 (MTPTDFTSPIPNMADDYGSESTSSMEDYVNFNFTDFYCEKNNVRQFAS) lie on the Extracellular side of the membrane. Asparagine 32 carries N-linked (GlcNAc...) asparagine glycosylation. 2 disulfides stabilise this stretch: cysteine 38–cysteine 289 and cysteine 119–cysteine 198. A helical membrane pass occupies residues 49–74 (HFLPPLYWLVFIVGALGNSLVILVYW). Topologically, residues 75–85 (YCTRVKTMTDM) are cytoplasmic. Residues 86 to 109 (FLLNLAIADLLFLVTLPFWAIAAA) form a helical membrane-spanning segment. The Extracellular segment spans residues 110–120 (DQWKFQTFMCK). A helical membrane pass occupies residues 121-150 (VVNSMYKMNFYSCVLLIMCISVDRYIAIAQ). Residues 151 to 159 (AMRAHTWRE) lie on the Cytoplasmic side of the membrane. A helical transmembrane segment spans residues 160-185 (KRLLYSKMVCFTIWVLAAALCIPEIL). Over 186–208 (YSQIKEESGIAICTMVYPSDEST) the chain is Extracellular. Residues 209-243 (KLKSAVLTLKVILGFFLPFVVMACCYTIIIHTLIQ) traverse the membrane as a helical segment. Residues 244–248 (AKKSS) lie on the Cytoplasmic side of the membrane. A helical transmembrane segment spans residues 249–283 (KHKALKVTITVLTVFVLSQFPYNCILLVQTIDAYA). Residues 284–290 (MFISNCA) are Extracellular-facing. Residues 291–321 (VSTNIDICFQVTQTIAFFHSCLNPVLYVFVG) form a helical membrane-spanning segment. Topologically, residues 322-369 (ERFRRDLVKTLKNLGCISQAQWVSFTRREGSLKLSSMLLETTSGALSL) are cytoplasmic.

Belongs to the G-protein coupled receptor 1 family. As to expression, highly expressed in the thymus and low in lymph nodes and spleen.

The protein resides in the cell membrane. Its function is as follows. Receptor for chemokine SCYA25/TECK. Subsequently transduces a signal by increasing the intracellular calcium ions level. (Microbial infection) Alternative coreceptor with CD4 for HIV-1 infection. The chain is C-C chemokine receptor type 9 (CCR9) from Homo sapiens (Human).